The primary structure comprises 646 residues: UvrABC system protein C (646 aa).

The region spanning 16–95 (VEPGVYRFRD…IKEFDPRFNV (80 aa)) is the GIY-YIG domain. Residues 208–243 (DRFARALEQQMNAAAEQLDFERAARLRDDLSALKRA) enclose the UVR domain.

This sequence belongs to the UvrC family. Interacts with UvrB in an incision complex.

It localises to the cytoplasm. The UvrABC repair system catalyzes the recognition and processing of DNA lesions. UvrC both incises the 5' and 3' sides of the lesion. The N-terminal half is responsible for the 3' incision and the C-terminal half is responsible for the 5' incision. The sequence is that of UvrABC system protein C from Mycobacterium bovis (strain BCG / Pasteur 1173P2).